A 600-amino-acid polypeptide reads, in one-letter code: ATP-dependent lipid A-core flippase (600 aa).

5 consecutive transmembrane segments (helical) span residues 28–48 (IMAVLGLITYGAVDAAFIAFI), 80–100 (IMLMAPIAVILMFSLRGVANF), 182–202 (WKLSLCILVIGPIMGVVISVV), 267–287 (ISQPLIMVIGSFALAFVLYAA), and 295–315 (DLTAGTFAAILGAMLAMLQPI). Residues 28-327 (IMAVLGLITY…LTRVNAEFQR (300 aa)) enclose the ABC transmembrane type-1 domain. Residues 359-596 (LAFDNVTFAY…AGIYANLYQM (238 aa)) form the ABC transporter domain. An ATP-binding site is contributed by 393–400 (GRSGSGKS).

This sequence belongs to the ABC transporter superfamily. Lipid exporter (TC 3.A.1.106) family. As to quaternary structure, homodimer.

Its subcellular location is the cell inner membrane. It catalyses the reaction ATP + H2O + lipid A-core oligosaccharideSide 1 = ADP + phosphate + lipid A-core oligosaccharideSide 2.. In terms of biological role, involved in lipopolysaccharide (LPS) biosynthesis. Translocates lipid A-core from the inner to the outer leaflet of the inner membrane. Transmembrane domains (TMD) form a pore in the inner membrane and the ATP-binding domain (NBD) is responsible for energy generation. This Shewanella frigidimarina (strain NCIMB 400) protein is ATP-dependent lipid A-core flippase.